The primary structure comprises 337 residues: Casein kinase I isoform alpha (337 aa).

The Protein kinase domain maps to 20–288 (YRVIRKIGSG…YLRQLFRILF (269 aa)). Residues 26–34 (IGSGSFGDI) and lysine 49 contribute to the ATP site. Catalysis depends on aspartate 139, which acts as the Proton acceptor.

The protein belongs to the protein kinase superfamily. CK1 Ser/Thr protein kinase family. Casein kinase I subfamily. As to quaternary structure, interacts with cos. It depends on Mg(2+) as a cofactor. Post-translationally, phosphorylated. The dephosphorylated kinase is active in the cytoplasm while the active kinase in the nucleus is phosphorylated.

It is found in the cytoplasm. The protein localises to the nucleus. The enzyme catalyses L-seryl-[protein] + ATP = O-phospho-L-seryl-[protein] + ADP + H(+). It catalyses the reaction L-threonyl-[protein] + ATP = O-phospho-L-threonyl-[protein] + ADP + H(+). With respect to regulation, activity increases following DNA damage. Its function is as follows. Casein kinases are operationally defined by their preferential utilization of acidic proteins such as caseins as substrates. Can phosphorylate a large number of proteins. Negative regulator of wg signaling. Phosphorylates arm directly or indirectly and stimulates its degradation which prevents inappropriate wg signaling. Phosphorylates smo which promotes its accumulation at the cell surface and its signaling activity in response to hh. Together with dco, regulates proteolytic processing of ci by phosphorylating it, which promotes its binding to slmb, the F-box recognition component of the SCF(slmb) E3 ubiquitin-protein ligase required for ci processing. Inhibits condensin II interphase activity by promoting degradation of the Cap-H2 regulatory subunit and limiting the levels of chromatin-bound Cap-H2 which regulates interphase chromosome organization. The polypeptide is Casein kinase I isoform alpha (CkIalpha) (Drosophila melanogaster (Fruit fly)).